Reading from the N-terminus, the 114-residue chain is Iron-sulfur cluster insertion protein ErpA (114 aa).

Iron-sulfur cluster contacts are provided by Cys42, Cys106, and Cys108.

This sequence belongs to the HesB/IscA family. Homodimer. Requires iron-sulfur cluster as cofactor.

Required for insertion of 4Fe-4S clusters for at least IspG. The chain is Iron-sulfur cluster insertion protein ErpA from Cronobacter sakazakii (strain ATCC BAA-894) (Enterobacter sakazakii).